A 171-amino-acid polypeptide reads, in one-letter code: 3-hydroxydecanoyl-[acyl-carrier-protein] dehydratase (171 aa).

His70 is an active-site residue.

The protein belongs to the thioester dehydratase family. FabA subfamily. As to quaternary structure, homodimer.

It is found in the cytoplasm. It catalyses the reaction a (3R)-hydroxyacyl-[ACP] = a (2E)-enoyl-[ACP] + H2O. The catalysed reaction is (3R)-hydroxydecanoyl-[ACP] = (2E)-decenoyl-[ACP] + H2O. It carries out the reaction (2E)-decenoyl-[ACP] = (3Z)-decenoyl-[ACP]. It participates in lipid metabolism; fatty acid biosynthesis. Necessary for the introduction of cis unsaturation into fatty acids. Catalyzes the dehydration of (3R)-3-hydroxydecanoyl-ACP to E-(2)-decenoyl-ACP and then its isomerization to Z-(3)-decenoyl-ACP. Can catalyze the dehydratase reaction for beta-hydroxyacyl-ACPs with saturated chain lengths up to 16:0, being most active on intermediate chain length. The chain is 3-hydroxydecanoyl-[acyl-carrier-protein] dehydratase from Photobacterium profundum (strain SS9).